The chain runs to 387 residues: Protein TsgA homolog (387 aa).

12 helical membrane passes run 11 to 31 (WISF…GMIM), 47 to 67 (NIFT…SWLI), 76 to 96 (LIFG…STSI), 101 to 121 (INIF…TFII), 134 to 154 (LLLT…ISAY), 160 to 180 (ILWY…FILT), 205 to 225 (IILL…FISW), 243 to 263 (VLVS…SFII), 271 to 291 (MFIF…YSKS), 299 to 319 (IISL…LASL), 331 to 351 (LILF…SPIV), and 358 to 378 (TTLI…CIIF).

Belongs to the major facilitator superfamily. TsgA family.

It localises to the cell membrane. The chain is Protein TsgA homolog from Buchnera aphidicola subsp. Schizaphis graminum (strain Sg).